A 567-amino-acid polypeptide reads, in one-letter code: 2-succinyl-5-enolpyruvyl-6-hydroxy-3-cyclohexene-1-carboxylate synthase (567 aa).

Belongs to the TPP enzyme family. MenD subfamily. Homodimer. Mg(2+) is required as a cofactor. Mn(2+) serves as cofactor. The cofactor is thiamine diphosphate.

The enzyme catalyses isochorismate + 2-oxoglutarate + H(+) = 5-enolpyruvoyl-6-hydroxy-2-succinyl-cyclohex-3-ene-1-carboxylate + CO2. It functions in the pathway quinol/quinone metabolism; 1,4-dihydroxy-2-naphthoate biosynthesis; 1,4-dihydroxy-2-naphthoate from chorismate: step 2/7. Its pathway is quinol/quinone metabolism; menaquinone biosynthesis. Its function is as follows. Catalyzes the thiamine diphosphate-dependent decarboxylation of 2-oxoglutarate and the subsequent addition of the resulting succinic semialdehyde-thiamine pyrophosphate anion to isochorismate to yield 2-succinyl-5-enolpyruvyl-6-hydroxy-3-cyclohexene-1-carboxylate (SEPHCHC). The protein is 2-succinyl-5-enolpyruvyl-6-hydroxy-3-cyclohexene-1-carboxylate synthase of Yersinia pestis bv. Antiqua (strain Angola).